The primary structure comprises 300 residues: MKIDLTTLVTESRNKASENIDVLSTVEMLTVINQEDQKVALAVEAILPQIADVVDAIAVAFQSGGRLIYTGAGTSGRLGILDASECPPTYGSNPDLVVGLIAGGHKAILKAVENAEDNRELGASDLQDLGLNEKDVLVGIAASGRTPYVLGAMEYAKSVGATVATLSCNPNSPMTELADINMTPVVGPEVVTGSSRMKAGTAQKLVLNMLTTGAMIRTGKVFGNLMVDVEATNAKLVQRQKNIVIEATGCSEVEASEALSQCDNHCKTAILMVLSGLDAQSAKAKLAQHNGFIRNALSDQ.

The region spanning 57-220 (IAVAFQSGGR…TTGAMIRTGK (164 aa)) is the SIS domain. Glu85 serves as the catalytic Proton donor. Glu116 is an active-site residue.

Belongs to the GCKR-like family. MurNAc-6-P etherase subfamily. In terms of assembly, homodimer.

It carries out the reaction N-acetyl-D-muramate 6-phosphate + H2O = N-acetyl-D-glucosamine 6-phosphate + (R)-lactate. Its pathway is amino-sugar metabolism; 1,6-anhydro-N-acetylmuramate degradation. The protein operates within amino-sugar metabolism; N-acetylmuramate degradation. It participates in cell wall biogenesis; peptidoglycan recycling. Functionally, specifically catalyzes the cleavage of the D-lactyl ether substituent of MurNAc 6-phosphate, producing GlcNAc 6-phosphate and D-lactate. Together with AnmK, is also required for the utilization of anhydro-N-acetylmuramic acid (anhMurNAc) either imported from the medium or derived from its own cell wall murein, and thus plays a role in cell wall recycling. This chain is N-acetylmuramic acid 6-phosphate etherase, found in Aliivibrio fischeri (strain ATCC 700601 / ES114) (Vibrio fischeri).